The following is a 306-amino-acid chain: Ribose-5-phosphate isomerase (306 aa).

The interval 45–68 (GRAQFGVGSTSTSSGDANSVCPAP) is disordered. Residues 51–61 (VGSTSTSSGDA) are compositionally biased toward polar residues. Ser102 bears the Phosphoserine mark.

Belongs to the ribose 5-phosphate isomerase family.

The enzyme catalyses aldehydo-D-ribose 5-phosphate = D-ribulose 5-phosphate. It functions in the pathway carbohydrate degradation; pentose phosphate pathway; D-ribose 5-phosphate from D-ribulose 5-phosphate (non-oxidative stage): step 1/1. This chain is Ribose-5-phosphate isomerase, found in Sus scrofa (Pig).